Reading from the N-terminus, the 432-residue chain is Adenylosuccinate synthetase (432 aa).

GTP contacts are provided by residues 12–18 (GDEGKGK) and 40–42 (GHT). Asp-13 serves as the catalytic Proton acceptor. Mg(2+)-binding residues include Asp-13 and Gly-40. Residues 13 to 16 (DEGK), 38 to 41 (NAGH), Thr-126, Arg-140, Gln-219, Thr-234, and Arg-300 each bind IMP. His-41 serves as the catalytic Proton donor. 296-302 (STTGRPR) serves as a coordination point for substrate. Residues Arg-302, 328–330 (KLD), and 410–412 (STG) contribute to the GTP site.

This sequence belongs to the adenylosuccinate synthetase family. Homodimer. Requires Mg(2+) as cofactor.

The protein localises to the cytoplasm. It carries out the reaction IMP + L-aspartate + GTP = N(6)-(1,2-dicarboxyethyl)-AMP + GDP + phosphate + 2 H(+). Its pathway is purine metabolism; AMP biosynthesis via de novo pathway; AMP from IMP: step 1/2. Functionally, plays an important role in the de novo pathway of purine nucleotide biosynthesis. Catalyzes the first committed step in the biosynthesis of AMP from IMP. This chain is Adenylosuccinate synthetase, found in Aquifex aeolicus (strain VF5).